Consider the following 485-residue polypeptide: Sulfate adenylyltransferase subunit 1 (485 aa).

The tr-type G domain maps to 30–243 (KGLLRFLTCG…ELLETIDTQR (214 aa)). Residues 39 to 46 (GSVDDGKS) are G1. A GTP-binding site is contributed by 39-46 (GSVDDGKS). Residues 97–101 (GITID) are G2. Residues 118-121 (DTPG) form a G3 region. GTP-binding positions include 118–122 (DTPGH) and 173–176 (NKMD). The G4 stretch occupies residues 173 to 176 (NKMD). A G5 region spans residues 210 to 212 (SAL).

This sequence belongs to the TRAFAC class translation factor GTPase superfamily. Classic translation factor GTPase family. CysN/NodQ subfamily. As to quaternary structure, heterodimer composed of CysD, the smaller subunit, and CysN.

It catalyses the reaction sulfate + ATP + H(+) = adenosine 5'-phosphosulfate + diphosphate. The protein operates within sulfur metabolism; hydrogen sulfide biosynthesis; sulfite from sulfate: step 1/3. Functionally, with CysD forms the ATP sulfurylase (ATPS) that catalyzes the adenylation of sulfate producing adenosine 5'-phosphosulfate (APS) and diphosphate, the first enzymatic step in sulfur assimilation pathway. APS synthesis involves the formation of a high-energy phosphoric-sulfuric acid anhydride bond driven by GTP hydrolysis by CysN coupled to ATP hydrolysis by CysD. The polypeptide is Sulfate adenylyltransferase subunit 1 (Shewanella oneidensis (strain ATCC 700550 / JCM 31522 / CIP 106686 / LMG 19005 / NCIMB 14063 / MR-1)).